Consider the following 370-residue polypeptide: 3-isopropylmalate dehydrogenase (370 aa).

4 residues coordinate substrate: arginine 99, arginine 109, arginine 137, and aspartate 227. Residues aspartate 227, aspartate 251, and aspartate 255 each contribute to the Mg(2+) site. 290–302 serves as a coordination point for NAD(+); the sequence is GSAPDIAGQDKAN.

It belongs to the isocitrate and isopropylmalate dehydrogenases family. LeuB type 1 subfamily. Homodimer. Mg(2+) serves as cofactor. The cofactor is Mn(2+).

The protein localises to the cytoplasm. The catalysed reaction is (2R,3S)-3-isopropylmalate + NAD(+) = 4-methyl-2-oxopentanoate + CO2 + NADH. The protein operates within amino-acid biosynthesis; L-leucine biosynthesis; L-leucine from 3-methyl-2-oxobutanoate: step 3/4. Its function is as follows. Catalyzes the oxidation of 3-carboxy-2-hydroxy-4-methylpentanoate (3-isopropylmalate) to 3-carboxy-4-methyl-2-oxopentanoate. The product decarboxylates to 4-methyl-2 oxopentanoate. The polypeptide is 3-isopropylmalate dehydrogenase (Rhodospirillum rubrum (strain ATCC 11170 / ATH 1.1.1 / DSM 467 / LMG 4362 / NCIMB 8255 / S1)).